Consider the following 223-residue polypeptide: Translation initiation factor 6 (223 aa).

This sequence belongs to the eIF-6 family.

Binds to the 50S ribosomal subunit and prevents its association with the 30S ribosomal subunit to form the 70S initiation complex. The polypeptide is Translation initiation factor 6 (Methanobrevibacter smithii (strain ATCC 35061 / DSM 861 / OCM 144 / PS)).